Here is a 603-residue protein sequence, read N- to C-terminus: Proline--tRNA ligase (603 aa).

This sequence belongs to the class-II aminoacyl-tRNA synthetase family. ProS type 1 subfamily. As to quaternary structure, homodimer.

Its subcellular location is the cytoplasm. The catalysed reaction is tRNA(Pro) + L-proline + ATP = L-prolyl-tRNA(Pro) + AMP + diphosphate. Its function is as follows. Catalyzes the attachment of proline to tRNA(Pro) in a two-step reaction: proline is first activated by ATP to form Pro-AMP and then transferred to the acceptor end of tRNA(Pro). As ProRS can inadvertently accommodate and process non-cognate amino acids such as alanine and cysteine, to avoid such errors it has two additional distinct editing activities against alanine. One activity is designated as 'pretransfer' editing and involves the tRNA(Pro)-independent hydrolysis of activated Ala-AMP. The other activity is designated 'posttransfer' editing and involves deacylation of mischarged Ala-tRNA(Pro). The misacylated Cys-tRNA(Pro) is not edited by ProRS. The polypeptide is Proline--tRNA ligase (Prochlorococcus marinus (strain SARG / CCMP1375 / SS120)).